The following is a 533-amino-acid chain: T-complex protein 1 subunit delta (533 aa).

The interval 1-26 (MSAPAAAPAKVLPSRSDFDEKEKEKD) is disordered. Basic and acidic residues predominate over residues 16-26 (SDFDEKEKEKD).

It belongs to the TCP-1 chaperonin family. Heterooligomeric complex of about 850 to 900 kDa that forms two stacked rings, 12 to 16 nm in diameter.

It localises to the cytoplasm. In terms of biological role, molecular chaperone; assists the folding of proteins upon ATP hydrolysis. Known to play a role, in vitro, in the folding of actin and tubulin. In Dictyostelium discoideum (Social amoeba), this protein is T-complex protein 1 subunit delta (cct4).